Reading from the N-terminus, the 312-residue chain is Nodulation protein D 2 (312 aa).

One can recognise an HTH lysR-type domain in the interval 6 to 63 (LDLNLLVALDALMTKRSVTAAARSINLSQPAMSAAIARLRTYFGDDLFTMRGRELIPT). The H-T-H motif DNA-binding region spans 23–42 (VTAAARSINLSQPAMSAAIA).

The protein belongs to the LysR transcriptional regulatory family.

Functionally, represses the expression of the nodABCIJ-nolO-noeI operon. In Sinorhizobium fredii (strain NBRC 101917 / NGR234), this protein is Nodulation protein D 2 (nodD2).